We begin with the raw amino-acid sequence, 2014 residues long: AP-1 accessory protein LAA1 (2014 aa).

Interacts with the clathrin-associated adapter complex AP-1. Interacts directly with LAA2.

It is found in the golgi apparatus. The protein localises to the cytoplasmic vesicle. The protein resides in the clathrin-coated vesicle. Involved in localization of clathrin adapter protein complex-1 (AP-1) and subsequent AP-1-mediated clathrin-coated vesicle cargo loading. In complex with LAA2, cooperates with the small GTPase ARF1 and the phosphatidyl-inositol-4-phosphate (PI4P) synthesis to confer temporal specificity to AP-1 recruitment. In Saccharomyces cerevisiae (strain ATCC 204508 / S288c) (Baker's yeast), this protein is AP-1 accessory protein LAA1.